We begin with the raw amino-acid sequence, 492 residues long: NADH-quinone oxidoreductase subunit N (492 aa).

Transmembrane regions (helical) follow at residues 13-33, 42-62, 79-99, 111-131, 133-153, 168-188, 211-231, 251-271, 284-304, 318-340, 344-366, 388-408, 426-446, and 463-483; these read MMTPEFIVLGTALILSLMDLF, PLAWIAFVGVAIALIATIGLI, FGKAFKLLLLAGGALSLLLAF, GEFYYLLLCALLGAMIMASSG, LITLFVGLELLSISSYILAGI, VINGGISTAITLFGMSYIFGL, YILAIAFLMMLVGLSFKISSV, FLSVVSKTAGFVIVLRLFITI, SLLFSMQDYIAFLAGATMIIG, FAYSSIAHAGYILVGFAAMSWVM, IWFYLLAYLFMNLGAFAILQRIS, AVAMGIFLLSLAGIPGTAGFI, VLAAVMIATTVVSYVYYFGIF, and PIGLAMVVVLCALGTLLFGVV.

This sequence belongs to the complex I subunit 2 family. As to quaternary structure, NDH-1 is composed of 14 different subunits. Subunits NuoA, H, J, K, L, M, N constitute the membrane sector of the complex.

The protein localises to the cell membrane. The enzyme catalyses a quinone + NADH + 5 H(+)(in) = a quinol + NAD(+) + 4 H(+)(out). NDH-1 shuttles electrons from NADH, via FMN and iron-sulfur (Fe-S) centers, to quinones in the respiratory chain. The immediate electron acceptor for the enzyme in this species is believed to be a menaquinone. Couples the redox reaction to proton translocation (for every two electrons transferred, four hydrogen ions are translocated across the cytoplasmic membrane), and thus conserves the redox energy in a proton gradient. This chain is NADH-quinone oxidoreductase subunit N, found in Geobacillus sp. (strain WCH70).